Consider the following 325-residue polypeptide: Diacylglycerol acyltransferase/mycolyltransferase Ag85B (325 aa).

The first 40 residues, M1–A40, serve as a signal peptide directing secretion. L82 to R83 contributes to the substrate binding site. Residues F98 to I108 are fibronectin-binding. C127 and C132 are disulfide-bonded. The substrate site is built by S166 and D194. The active-site Nucleophile is the S166. E270 is a catalytic residue. Substrate-binding positions include F272–S275, K279, and H302–W304. Residue H302 is part of the active site.

This sequence belongs to the mycobacterial A85 antigen family.

Its subcellular location is the secreted. It catalyses the reaction 2 alpha,alpha'-trehalose 6-mycolate = alpha,alpha'-trehalose 6,6'-bismycolate + alpha,alpha-trehalose. The catalysed reaction is an acyl-CoA + a 1,2-diacyl-sn-glycerol = a triacyl-sn-glycerol + CoA. In terms of biological role, the antigen 85 proteins (FbpA, FbpB, FbpC) are responsible for the high affinity of mycobacteria for fibronectin, a large adhesive glycoprotein, which facilitates the attachment of Mycobacteria to murine alveolar macrophages (AMs). They also help to maintain the integrity of the cell wall by catalyzing the transfer of mycolic acids to cell wall arabinogalactan and through the synthesis of alpha,alpha-trehalose dimycolate (TDM, cord factor). They catalyze the transfer of a mycoloyl residue from one molecule of alpha,alpha-trehalose monomycolate (TMM) to another TMM, leading to the formation of TDM. This is Diacylglycerol acyltransferase/mycolyltransferase Ag85B (fbpB) from Mycobacterium bovis (strain BCG / Pasteur 1173P2).